The primary structure comprises 289 residues: MSGPAIDASPALTFNQSSASIQQRRLSTGRQMWVLYRRFAAPSLLNGEVLTTVGAPIIFMVGFYIPFAIPWNQFVGGASSGVASNLGQYITPLVTLQAVSFAAIGSGFRAATDSLLGVNRRFQSMPMAPLTPLLARVWVAVDRCFTGLVISLVCGYVIGFRFHRGALYIVGFCLLVIAIGAVLSFAADLVGTVTRNPDAMLPLLSLPILIFGLLSIGLMPLKLFPHWIHPFVRNQPISQFVAALRALAGDTTKTASQVSWPVMAPTLTWLFAFVVILALSSTIVLARRP.

The 236-residue stretch at G47 to T282 folds into the ABC transmembrane type-2 domain. 6 helical membrane passes run V49–I69, Q88–F108, W138–I158, A166–A186, A199–M219, and T266–A286.

The protein belongs to the ABC-2 integral membrane protein family. The complex is composed of two ATP-binding proteins (DrrA) and two transmembrane proteins (DrrB and DrrC).

Its subcellular location is the cell membrane. In terms of biological role, part of the ABC transporter complex DrrABC involved in doxorubicin resistance. Probably responsible for the translocation of the substrate across the membrane. The protein is Doxorubicin resistance ABC transporter permease protein DrrB (drrB) of Mycobacterium tuberculosis (strain CDC 1551 / Oshkosh).